A 2885-amino-acid polypeptide reads, in one-letter code: E3 ubiquitin-protein ligase hyd (2885 aa).

Residues 83 to 138 (SDAKCSTSGGSGTASASKAPSSSRPMARSRARLLRATGRSNSTGQGSGSRSTGVII) form a disordered region. Low complexity-rich tracts occupy residues 95–108 (TASA…SRPM) and 116–138 (LRAT…GVII). One can recognise a UBA domain in the interval 154–196 (YVPEELISQAEVVLQGKSRNLIIRELQRTNLDVNLAVNNLLSR). Low complexity predominate over residues 266–276 (ANANAADSNQS). Disordered regions lie at residues 266 to 291 (ANAN…TGNS), 580 to 664 (NNLN…GRKD), and 711 to 731 (AATS…KEDD). Polar residues-rich tracts occupy residues 277–291 (TTRS…TGNS) and 598–615 (AMPS…SNSK). Residues S628 and S631 each carry the phosphoserine modification. Positions 650 to 664 (TTKEDSNAPQEGRKD) are enriched in basic and acidic residues. Over residues 711–722 (AATSSTSNTAST) the composition is skewed to low complexity. S967 bears the Phosphoserine mark. Residues 1008–1032 (ASSSNENSSFATMSSSAAGSASSTS) are compositionally biased toward low complexity. The tract at residues 1008–1035 (ASSSNENSSFATMSSSAAGSASSTSRDN) is disordered. The segment at 1217 to 1285 (DTCSFTWTGA…EKCKCKALIA (69 aa)) adopts a UBR-type zinc-finger fold. S1362 carries the phosphoserine modification. The interval 1642 to 1761 (NEDGMQDDES…IRSRDTARSS (120 aa)) is disordered. The segment covering 1669-1681 (NQSNQEVQRSVQA) has biased composition (polar residues). Positions 1696 to 1721 (LEDESGDSSAQEEDGSEDGESDDQSD) are enriched in acidic residues. The segment covering 1735 to 1749 (TNSNARSDLAPQTMQ) has biased composition (polar residues). The residue at position 2037 (S2037) is a Phosphoserine. The interval 2124 to 2143 (IDSSKTGDGNVTNKAEGSTD) is disordered. Phosphoserine is present on S2183. Residues 2473 to 2492 (NLDARPYTPPNSSDNATPES) form a disordered region. Residues 2482 to 2492 (PNSSDNATPES) are compositionally biased toward polar residues. Residues 2484-2561 (SSDNATPESL…AIEIITFKQK (78 aa)) enclose the PABC domain. S2574 carries the phosphoserine modification. Positions 2782–2885 (FNDESSEGPD…AIKSKNFGFV (104 aa)) constitute an HECT domain. C2854 functions as the Glycyl thioester intermediate in the catalytic mechanism.

It belongs to the UBR5 family.

It is found in the nucleus. It localises to the cytoplasm. The catalysed reaction is S-ubiquitinyl-[E2 ubiquitin-conjugating enzyme]-L-cysteine + [acceptor protein]-L-lysine = [E2 ubiquitin-conjugating enzyme]-L-cysteine + N(6)-ubiquitinyl-[acceptor protein]-L-lysine.. It participates in protein modification; protein ubiquitination. In terms of biological role, E3 ubiquitin-protein ligase which accepts ubiquitin from an E2 ubiquitin-conjugating enzyme in the form of a thioester and then directly transfers the ubiquitin to targeted substrate. Required for regulation of cell proliferation in imaginal disks and germ cells. Acts as a negative regulator of hh, ci and dpp expression in the anterior of the eye disk. Acts as a positive regulator of the canonical Wnt signaling pathway by mediating ubiquitination and degradation of gro. Catalyzes 'Lys-63'-linked polyubiquitination of akirin, thereby activating the immune deficiency pathway (Imd). This chain is E3 ubiquitin-protein ligase hyd (hyd), found in Drosophila melanogaster (Fruit fly).